The primary structure comprises 148 residues: Putative nickel-responsive regulator (148 aa).

The Ni(2+) site is built by His88, His99, His101, and Cys107.

The protein belongs to the transcriptional regulatory CopG/NikR family. The cofactor is Ni(2+).

In terms of biological role, transcriptional regulator. This Helicobacter pylori (strain HPAG1) protein is Putative nickel-responsive regulator.